The primary structure comprises 1258 residues: Phosphatidylinositol 3,4,5-trisphosphate 5-phosphatase 2 (1258 aa).

The 97-residue stretch at 21–117 (WYHRDLSRAA…GLVCALLLPV (97 aa)) folds into the SH2 domain. The span at 119 to 132 (GEREPDPPDDRDAS) shows a compositional bias: basic and acidic residues. The tract at residues 119-180 (GEREPDPPDD…AESAPNGLST (62 aa)) is disordered. S132 is subject to Phosphoserine. Residues 145–155 (SGSTSISAPTG) are compositionally biased toward polar residues. Residues 156 to 166 (PSSPLPAPETP) show a composition bias toward pro residues. T165 is subject to Phosphothreonine. Phosphoserine is present on residues S241 and S352. A Phosphotyrosine modification is found at Y886. At S890 the chain carries Phosphoserine. The segment at 897 to 1118 (GAKSKAPSVS…FLGEVASGDD (222 aa)) is disordered. Pro residues predominate over residues 938 to 950 (PPPTGRPPAPPRA). The SH3-binding signature appears at 944–949 (PPAPPR). A compositionally biased stretch (basic and acidic residues) spans 951 to 965 (APREEPLTPRLKPEG). T958 is modified (phosphothreonine). Positions 983–986 (NPAY) match the NPXY motif motif. Y986 is modified (phosphotyrosine; by SRC). Pro residues-rich tracts occupy residues 996-1007 (LLPPEPPSPARA), 1048-1059 (LPPPDFPPPPLP), and 1087-1104 (GPPPPKAHPRPPLPPGPS). S1131 carries the phosphoserine modification. Phosphotyrosine is present on residues Y1135 and Y1162. Positions 1196-1258 (LGEAGMSAWL…LLLDTLQLSK (63 aa)) constitute an SAM domain. S1257 is modified (phosphoserine).

This sequence belongs to the inositol 1,4,5-trisphosphate 5-phosphatase family. As to quaternary structure, interacts with tyrosine phosphorylated form of SHC1. Interacts with EGFR. Upon stimulation by the EGF signaling pathway, it forms a complex with SHC1 and EGFR. Interacts with cytoskeletal protein SORBS3/vinexin, promoting its localization to the periphery of cells. Forms a complex with filamin (FLNA or FLNB), actin, GPIb (GP1BA or GP1BB) that regulates cortical and submembraneous actin. Interacts with c-Met/MET, when c-Met/MET is phosphorylated on 'Tyr-1356'. Interacts with p130Cas/BCAR1. Interacts with CENTD3/ARAP3 via its SAM domain. Interacts with c-Cbl/CBL and CAP/SORBS1. Interacts with activated EPHA2 receptor. Interacts with receptor FCGR2A. Interacts with receptor FCGR2B. Interacts with tyrosine kinase ABL1. Interacts with tyrosine kinase TEC. Interacts with CSF1R. Interacts (via N-terminus) with SH3YL1 (via SH3 domain). Interacts with FCRL6 (tyrosine phosphorylated form). Interacts (via SH2 domain) with tyrosine phosphorylated KLRC1 (via ITIM). Interacts with NEDD9/HEF1. Post-translationally, tyrosine phosphorylated by the members of the SRC family after exposure to a diverse array of extracellular stimuli such as insulin, growth factors such as EGF or PDGF, chemokines, integrin ligands and hypertonic and oxidative stress. May be phosphorylated upon IgG receptor FCGR2B-binding. Phosphorylated at Tyr-986 following cell attachment and spreading. Phosphorylated at Tyr-1162 following EGF signaling pathway stimulation. Phosphorylated at Thr-958 in response to PDGF. In terms of tissue distribution, widely expressed, most prominently in skeletal muscle, heart and brain. Present in platelets. Expressed in transformed myeloid cells and in primary macrophages, but not in peripheral blood monocytes.

The protein resides in the cytoplasm. The protein localises to the cytosol. It localises to the cytoskeleton. It is found in the membrane. Its subcellular location is the cell projection. The protein resides in the filopodium. The protein localises to the lamellipodium. It localises to the basal cell membrane. It is found in the nucleus. Its subcellular location is the nucleus speckle. The protein resides in the spindle pole. The enzyme catalyses a 1,2-diacyl-sn-glycero-3-phospho-(1D-myo-inositol-3,4,5-trisphosphate) + H2O = a 1,2-diacyl-sn-glycero-3-phospho-(1D-myo-inositol-3,4-bisphosphate) + phosphate. It catalyses the reaction 1,2-dioctanoyl-sn-glycero-3-phospho-(1D-myo-inositol-3,4,5-trisphosphate) + H2O = 1,2-dioctanoyl-sn-glycero-3-phospho-(1D-myo-inositol-3,4-bisphosphate) + phosphate. The catalysed reaction is 1,2-dihexadecanoyl-sn-glycero-3-phospho-(1D-myo-inositol-3,4,5-trisphosphate) + H2O = 1,2-dihexadecanoyl-sn-glycero-3-phospho-(1D-myo-inositol-3,4-bisphosphate) + phosphate. With respect to regulation, activated upon translocation to the sites of synthesis of PtdIns(3,4,5)P3 in the membrane. Enzymatic activity is enhanced in the presence of phosphatidylserine. Its function is as follows. Phosphatidylinositol (PtdIns) phosphatase that specifically hydrolyzes the 5-phosphate of phosphatidylinositol-3,4,5-trisphosphate (PtdIns(3,4,5)P3) to produce PtdIns(3,4)P2, thereby negatively regulating the PI3K (phosphoinositide 3-kinase) pathways. Required for correct mitotic spindle orientation and therefore progression of mitosis. Plays a central role in regulation of PI3K-dependent insulin signaling, although the precise molecular mechanisms and signaling pathways remain unclear. While overexpression reduces both insulin-stimulated MAP kinase and Akt activation, its absence does not affect insulin signaling or GLUT4 trafficking. Confers resistance to dietary obesity. May act by regulating AKT2, but not AKT1, phosphorylation at the plasma membrane. Part of a signaling pathway that regulates actin cytoskeleton remodeling. Required for the maintenance and dynamic remodeling of actin structures as well as in endocytosis, having a major impact on ligand-induced EGFR internalization and degradation. Participates in regulation of cortical and submembraneous actin by hydrolyzing PtdIns(3,4,5)P3 thereby regulating membrane ruffling. Regulates cell adhesion and cell spreading. Required for HGF-mediated lamellipodium formation, cell scattering and spreading. Acts as a negative regulator of EPHA2 receptor endocytosis by inhibiting via PI3K-dependent Rac1 activation. Acts as a regulator of neuritogenesis by regulating PtdIns(3,4,5)P3 level and is required to form an initial protrusive pattern, and later, maintain proper neurite outgrowth. Acts as a negative regulator of the FC-gamma-RIIA receptor (FCGR2A). Mediates signaling from the FC-gamma-RIIB receptor (FCGR2B), playing a central role in terminating signal transduction from activating immune/hematopoietic cell receptor systems. Involved in EGF signaling pathway. Upon stimulation by EGF, it is recruited by EGFR and dephosphorylates PtdIns(3,4,5)P3. Plays a negative role in regulating the PI3K-PKB pathway, possibly by inhibiting PKB activity. Down-regulates Fc-gamma-R-mediated phagocytosis in macrophages independently of INPP5D/SHIP1. In macrophages, down-regulates NF-kappa-B-dependent gene transcription by regulating macrophage colony-stimulating factor (M-CSF)-induced signaling. Plays a role in the localization of AURKA and NEDD9/HEF1 to the basolateral membrane at interphase in polarized cysts, thereby mediates cell cycle homeostasis, cell polarization and cilia assembly. Additionally promotion of cilia growth is also facilitated by hydrolysis of (PtdIns(3,4,5)P3) to PtdIns(3,4)P2. Promotes formation of apical membrane-initiation sites during the initial stages of lumen formation via Rho family-induced actin filament organization and CTNNB1 localization to cell-cell contacts. May also hydrolyze PtdIns(1,3,4,5)P4, and could thus affect the levels of the higher inositol polyphosphates like InsP6. Involved in endochondral ossification. The sequence is that of Phosphatidylinositol 3,4,5-trisphosphate 5-phosphatase 2 from Homo sapiens (Human).